Here is a 93-residue protein sequence, read N- to C-terminus: Large ribosomal subunit protein uL23cy (93 aa).

It belongs to the universal ribosomal protein uL23 family. In terms of assembly, part of the 50S ribosomal subunit.

The protein localises to the plastid. Its subcellular location is the chloroplast. Functionally, binds to 23S rRNA. This Agrostis stolonifera (Creeping bentgrass) protein is Large ribosomal subunit protein uL23cy (rpl23-B).